A 248-amino-acid polypeptide reads, in one-letter code: ATP synthase subunit a, chloroplastic (248 aa).

5 helical membrane passes run 39–59 (QVLI…ILAV), 96–116 (VPFI…GALF), 135–155 (INTT…AGLT), 200–220 (LVVV…VMFL), and 221–241 (GLFT…AYIG).

The protein belongs to the ATPase A chain family. As to quaternary structure, F-type ATPases have 2 components, CF(1) - the catalytic core - and CF(0) - the membrane proton channel. CF(1) has five subunits: alpha(3), beta(3), gamma(1), delta(1), epsilon(1). CF(0) has four main subunits: a, b, b' and c.

It is found in the plastid. It localises to the chloroplast thylakoid membrane. Key component of the proton channel; it plays a direct role in the translocation of protons across the membrane. The polypeptide is ATP synthase subunit a, chloroplastic (Pelargonium hortorum (Common geranium)).